A 268-amino-acid chain; its full sequence is Imidazole glycerol phosphate synthase subunit HisF (268 aa).

Catalysis depends on residues D12 and D131.

The protein belongs to the HisA/HisF family. Heterodimer of HisH and HisF.

It localises to the cytoplasm. The enzyme catalyses 5-[(5-phospho-1-deoxy-D-ribulos-1-ylimino)methylamino]-1-(5-phospho-beta-D-ribosyl)imidazole-4-carboxamide + L-glutamine = D-erythro-1-(imidazol-4-yl)glycerol 3-phosphate + 5-amino-1-(5-phospho-beta-D-ribosyl)imidazole-4-carboxamide + L-glutamate + H(+). Its pathway is amino-acid biosynthesis; L-histidine biosynthesis; L-histidine from 5-phospho-alpha-D-ribose 1-diphosphate: step 5/9. In terms of biological role, IGPS catalyzes the conversion of PRFAR and glutamine to IGP, AICAR and glutamate. The HisF subunit catalyzes the cyclization activity that produces IGP and AICAR from PRFAR using the ammonia provided by the HisH subunit. The protein is Imidazole glycerol phosphate synthase subunit HisF of Methanocorpusculum labreanum (strain ATCC 43576 / DSM 4855 / Z).